The sequence spans 133 residues: Egg protein CP422 (133 aa).

Residues 1–21 form the signal peptide; it reads MHECMIVFFIFAVVSIYYADA. Intrachain disulfides connect cysteine 107–cysteine 121, cysteine 114–cysteine 125, and cysteine 120–cysteine 130.

It localises to the secreted. The chain is Egg protein CP422 (CP422) from Schistosoma japonicum (Blood fluke).